Here is a 43-residue protein sequence, read N- to C-terminus: Ferritin light chain (43 aa).

In terms of domain architecture, Ferritin-like diiron spans 1-43; the sequence is MEAALLVEKNLNQALLDLHGLASARGDPHICDFLENHFLDEEV.

This sequence belongs to the ferritin family. As to quaternary structure, oligomer of 24 subunits. There are two types of subunits: L (light) chain and H (heavy) chain. The major chain can be light or heavy, depending on the species and tissue type. The functional molecule forms a roughly spherical shell with a diameter of 12 nm and contains a central cavity into which the insoluble mineral iron core is deposited. Interacts with NCOA4.

It is found in the cytoplasmic vesicle. It localises to the autophagosome. The protein localises to the cytoplasm. The protein resides in the autolysosome. Stores iron in a soluble, non-toxic, readily available form. Important for iron homeostasis. Iron is taken up in the ferrous form and deposited as ferric hydroxides after oxidation. Also plays a role in delivery of iron to cells. Mediates iron uptake in capsule cells of the developing kidney. Delivery to lysosomes by the cargo receptor NCOA4 for autophagic degradation and release or iron. The polypeptide is Ferritin light chain (FTL) (Ovis aries (Sheep)).